Here is a 316-residue protein sequence, read N- to C-terminus: MTEKPTLHPRNRHQGRYDFPSLIKAHPDLARFTITNPHGKPSIDFANPEAVRVFNRALLKAQYGIQHWDIPADYLCPPIPGRADYIHVAADLLADDNAGEVPKGAQVRALDIGVGANCIYPLLGHSDYRWRFLGSDIDPVALASAKAIVQANGLGKAIILRQQANRAHILSGLLQEGERFDLTLCNPPFHASRDEATRGSQRKWKNLGKQDPKRKLPVLNFGGQNNELWCEGGEIRFVSQLVGESVQYAERVLWFTSLVSKASNLPGIEAALKKAGAKAVRIIEMGQGQKQSRMVAWSFHDAAARLAWHAQRKSQA.

The protein belongs to the methyltransferase superfamily. METTL16/RlmF family.

It is found in the cytoplasm. It catalyses the reaction adenosine(1618) in 23S rRNA + S-adenosyl-L-methionine = N(6)-methyladenosine(1618) in 23S rRNA + S-adenosyl-L-homocysteine + H(+). Specifically methylates the adenine in position 1618 of 23S rRNA. This Pseudomonas putida (strain GB-1) protein is Ribosomal RNA large subunit methyltransferase F.